A 154-amino-acid polypeptide reads, in one-letter code: UPF0756 membrane protein CKR_1028 (154 aa).

4 helical membrane passes run 5-25 (IILIIILTASVLGRANSVALA), 48-68 (NGLFLGLVILIASILIPIADG), 82-102 (WLGIFALLVSLFTTYLSGLGM), and 113-133 (IMPALILGAVIAAAFLGGVPV).

This sequence belongs to the UPF0756 family.

The protein resides in the cell membrane. The protein is UPF0756 membrane protein CKR_1028 of Clostridium kluyveri (strain NBRC 12016).